The following is a 122-amino-acid chain: Large ribosomal subunit protein uL14 (122 aa).

This sequence belongs to the universal ribosomal protein uL14 family. As to quaternary structure, part of the 50S ribosomal subunit. Forms a cluster with proteins L3 and L19. In the 70S ribosome, L14 and L19 interact and together make contacts with the 16S rRNA in bridges B5 and B8.

In terms of biological role, binds to 23S rRNA. Forms part of two intersubunit bridges in the 70S ribosome. This chain is Large ribosomal subunit protein uL14, found in Chlamydia trachomatis serovar A (strain ATCC VR-571B / DSM 19440 / HAR-13).